We begin with the raw amino-acid sequence, 188 residues long: MATYTTSDFKPGLKFMQDGEPCVIIENEFVKPGKGQAFTRTRIRKLISGKVLDVNFKSGTSVEAADVMDLNLTYSYKDEAFWYFMHPETFEQYSADAKAVGDAEKWLLDQADCIVTLWNGAPITITPPNFVELEVVETDPGLKGDTAGTGGKPATLSTGAVVKVPLFVQIGEVIKVDTRSGEYVSRVK.

Residue Lys34 is modified to N6-(3,6-diaminohexanoyl)-5-hydroxylysine.

The protein belongs to the elongation factor P family. In terms of processing, may be beta-lysylated on the epsilon-amino group of Lys-34 by the combined action of EpmA and EpmB, and then hydroxylated on the C5 position of the same residue by EpmC (if this protein is present). Lysylation is critical for the stimulatory effect of EF-P on peptide-bond formation. The lysylation moiety may extend toward the peptidyltransferase center and stabilize the terminal 3-CCA end of the tRNA. Hydroxylation of the C5 position on Lys-34 may allow additional potential stabilizing hydrogen-bond interactions with the P-tRNA.

Its subcellular location is the cytoplasm. Its pathway is protein biosynthesis; polypeptide chain elongation. Functionally, involved in peptide bond synthesis. Alleviates ribosome stalling that occurs when 3 or more consecutive Pro residues or the sequence PPG is present in a protein, possibly by augmenting the peptidyl transferase activity of the ribosome. Modification of Lys-34 is required for alleviation. The chain is Elongation factor P from Histophilus somni (strain 129Pt) (Haemophilus somnus).